The chain runs to 114 residues: MAEITSAKAMARTVRVSPRKTRLVLDLIRGKNVADAIAILKFTPNKAARIVEKTLNSAIANAENNFGLEKANLVVSETFANEGPTMKRFRPRAKGSASPINKRTTHVTVVVSEK.

The protein belongs to the universal ribosomal protein uL22 family. Part of the 50S ribosomal subunit.

This protein binds specifically to 23S rRNA; its binding is stimulated by other ribosomal proteins, e.g. L4, L17, and L20. It is important during the early stages of 50S assembly. It makes multiple contacts with different domains of the 23S rRNA in the assembled 50S subunit and ribosome. Functionally, the globular domain of the protein is located near the polypeptide exit tunnel on the outside of the subunit, while an extended beta-hairpin is found that lines the wall of the exit tunnel in the center of the 70S ribosome. The polypeptide is Large ribosomal subunit protein uL22 (Streptococcus thermophilus (strain CNRZ 1066)).